Reading from the N-terminus, the 269-residue chain is NAD kinase (269 aa).

The active-site Proton acceptor is aspartate 45. Residues 45–46 (DG), 122–123 (NE), arginine 149, aspartate 151, and alanine 186 each bind NAD(+).

It belongs to the NAD kinase family. The cofactor is a divalent metal cation.

It localises to the cytoplasm. It catalyses the reaction NAD(+) + ATP = ADP + NADP(+) + H(+). Its function is as follows. Involved in the regulation of the intracellular balance of NAD and NADP, and is a key enzyme in the biosynthesis of NADP. Catalyzes specifically the phosphorylation on 2'-hydroxyl of the adenosine moiety of NAD to yield NADP. This is NAD kinase from Staphylococcus saprophyticus subsp. saprophyticus (strain ATCC 15305 / DSM 20229 / NCIMB 8711 / NCTC 7292 / S-41).